A 206-amino-acid polypeptide reads, in one-letter code: Cytochrome b6-f complex iron-sulfur subunit, chloroplastic (206 aa).

The N-terminal 29 residues, 1–29 (MAMLSSRRVAAPAKASAIRRSRVMPVVRA), are a transit peptide targeting the chloroplast. A helical membrane pass occupies residues 39-68 (MNKRNIMNLILAGGAGLPITTLALGYGAFF). Residues 92 to 188 (AGEWLKTHLA…CDVAESGLVT (97 aa)) enclose the Rieske domain. [2Fe-2S] cluster contacts are provided by Cys134, His136, Cys152, and His155. An intrachain disulfide couples Cys139 to Cys154.

Belongs to the Rieske iron-sulfur protein family. In terms of assembly, the 4 large subunits of the cytochrome b6-f complex are cytochrome b6, subunit IV (17 kDa polypeptide, petD), cytochrome f and the Rieske protein, while the 4 small subunits are petG, petL, petM and petN. The complex functions as a dimer. Requires [2Fe-2S] cluster as cofactor.

Its subcellular location is the plastid. The protein localises to the chloroplast thylakoid membrane. The enzyme catalyses 2 oxidized [plastocyanin] + a plastoquinol + 2 H(+)(in) = 2 reduced [plastocyanin] + a plastoquinone + 4 H(+)(out). Its function is as follows. Component of the cytochrome b6-f complex, which mediates electron transfer between photosystem II (PSII) and photosystem I (PSI), cyclic electron flow around PSI, and state transitions. This is Cytochrome b6-f complex iron-sulfur subunit, chloroplastic (petC) from Chlamydomonas reinhardtii (Chlamydomonas smithii).